Consider the following 309-residue polypeptide: MTAKTIRHYLQFKDFSLEDYEYVLERTGILKRKFKNYETYHPLHDRTLAMIFEKSSTRTRLSFEAGIFQLGGHAVFMSTRDTQLGRGEPVEDSAQVISRMVDIIMIRTFEQDIIQRFAENSRVPVINGLTNEYHPCQVLADIFTYYEHRGPIRGKTVAWVGDANNMLYTWIQAARILGFKLRLSTPPGYALDTKLVDAESAPFYQVFDDPNEACKGADLVTTDVWTSMGFEAENEARKQAFADWCVDEEMMSHAHPDALFMHCLPAHRGEEVTAGVIDGPQSVVWDEAENRLHVQKALMEFLLLGRLNH.

Carbamoyl phosphate is bound by residues 56-59 (STRT), glutamine 83, arginine 107, and 134-137 (HPCQ). L-ornithine-binding positions include asparagine 165, aspartate 223, and 227–228 (SM). Carbamoyl phosphate is bound by residues 263-264 (CL) and arginine 291.

It belongs to the aspartate/ornithine carbamoyltransferase superfamily. OTCase family.

The protein resides in the cytoplasm. The enzyme catalyses carbamoyl phosphate + L-ornithine = L-citrulline + phosphate + H(+). Its pathway is amino-acid biosynthesis; L-arginine biosynthesis; L-arginine from L-ornithine and carbamoyl phosphate: step 1/3. Functionally, reversibly catalyzes the transfer of the carbamoyl group from carbamoyl phosphate (CP) to the N(epsilon) atom of ornithine (ORN) to produce L-citrulline. The protein is Ornithine carbamoyltransferase of Burkholderia mallei (strain ATCC 23344).